Consider the following 308-residue polypeptide: Tryptophan 2,3-dioxygenase (308 aa).

A disordered region spans residues M1–G35. Positions A17–P30 are enriched in low complexity. Residues F77–H81, Y139, and R143 each bind substrate. H266 contributes to the heme binding site. T280 provides a ligand contact to substrate.

It belongs to the tryptophan 2,3-dioxygenase family. As to quaternary structure, homotetramer. Requires heme as cofactor.

The enzyme catalyses L-tryptophan + O2 = N-formyl-L-kynurenine. It functions in the pathway amino-acid degradation; L-tryptophan degradation via kynurenine pathway; L-kynurenine from L-tryptophan: step 1/2. Its function is as follows. Heme-dependent dioxygenase that catalyzes the oxidative cleavage of the L-tryptophan (L-Trp) pyrrole ring and converts L-tryptophan to N-formyl-L-kynurenine. Catalyzes the oxidative cleavage of the indole moiety. In Burkholderia ambifaria (strain ATCC BAA-244 / DSM 16087 / CCUG 44356 / LMG 19182 / AMMD) (Burkholderia cepacia (strain AMMD)), this protein is Tryptophan 2,3-dioxygenase.